A 533-amino-acid polypeptide reads, in one-letter code: NADH-quinone oxidoreductase subunit N (533 aa).

Helical transmembrane passes span 13–33 (VWPL…EGFV), 40–60 (LVQA…TILV), 87–107 (PALF…LLFA), 141–161 (HTEV…FAAA), 164–184 (LLTL…LSGL), 200–220 (FMLG…VYGF), 243–263 (LLIG…AVPF), 275–295 (PTAV…GAML), 310–330 (QPML…IAIV), 337–357 (MLAY…LGVQ), 373–393 (VLFY…VVTL), 417–437 (VAGV…TAGF), 451–471 (GAWP…FFYV), and 502–522 (ATIF…GPVL).

Belongs to the complex I subunit 2 family. As to quaternary structure, NDH-1 is composed of 14 different subunits. Subunits NuoA, H, J, K, L, M, N constitute the membrane sector of the complex.

The protein resides in the cell membrane. It carries out the reaction a quinone + NADH + 5 H(+)(in) = a quinol + NAD(+) + 4 H(+)(out). NDH-1 shuttles electrons from NADH, via FMN and iron-sulfur (Fe-S) centers, to quinones in the respiratory chain. The immediate electron acceptor for the enzyme in this species is believed to be a menaquinone. Couples the redox reaction to proton translocation (for every two electrons transferred, four hydrogen ions are translocated across the cytoplasmic membrane), and thus conserves the redox energy in a proton gradient. The protein is NADH-quinone oxidoreductase subunit N of Nocardioides sp. (strain ATCC BAA-499 / JS614).